Here is a 285-residue protein sequence, read N- to C-terminus: Probable endonuclease 4 (285 aa).

Positions 69, 109, 145, 179, 182, 216, 229, 231, and 261 each coordinate Zn(2+).

The protein belongs to the AP endonuclease 2 family. Zn(2+) is required as a cofactor.

The catalysed reaction is Endonucleolytic cleavage to 5'-phosphooligonucleotide end-products.. In terms of biological role, endonuclease IV plays a role in DNA repair. It cleaves phosphodiester bonds at apurinic or apyrimidinic (AP) sites, generating a 3'-hydroxyl group and a 5'-terminal sugar phosphate. This chain is Probable endonuclease 4, found in Salmonella paratyphi C (strain RKS4594).